The sequence spans 203 residues: LexA repressor (203 aa).

The segment at residues 28–47 is a DNA-binding region (H-T-H motif); sequence IREIGDEFGITAKGAYDHLK. Catalysis depends on for autocatalytic cleavage activity residues serine 127 and lysine 164.

The protein belongs to the peptidase S24 family. As to quaternary structure, homodimer.

It catalyses the reaction Hydrolysis of Ala-|-Gly bond in repressor LexA.. Functionally, represses a number of genes involved in the response to DNA damage (SOS response), including recA and lexA. In the presence of single-stranded DNA, RecA interacts with LexA causing an autocatalytic cleavage which disrupts the DNA-binding part of LexA, leading to derepression of the SOS regulon and eventually DNA repair. This is LexA repressor from Leptospira borgpetersenii serovar Hardjo-bovis (strain JB197).